The following is a 175-amino-acid chain: Large ribosomal subunit protein uL10 (175 aa).

The protein belongs to the universal ribosomal protein uL10 family. As to quaternary structure, part of the ribosomal stalk of the 50S ribosomal subunit. The N-terminus interacts with L11 and the large rRNA to form the base of the stalk. The C-terminus forms an elongated spine to which L12 dimers bind in a sequential fashion forming a multimeric L10(L12)X complex.

Functionally, forms part of the ribosomal stalk, playing a central role in the interaction of the ribosome with GTP-bound translation factors. This Prochlorococcus marinus (strain NATL1A) protein is Large ribosomal subunit protein uL10.